A 616-amino-acid polypeptide reads, in one-letter code: Heme A synthase-mitochondrial ferredoxin fusion protein (616 aa).

The transit peptide at 1-45 (MNISRSSGLMRQFLLQPLRKGCDISCLGRSSWRMSRSFSGSSVLN) directs the protein to the mitochondrion. A heme a synthase cox15-like region spans residues 45 to 465 (NEINLSRTKN…AALSLAQRLH (421 aa)). The Mitochondrial matrix segment spans residues 46–97 (EINLSRTKNLFLNDCKFNKNSFEKFFARRLSNSVAPTPGGILQETEKIPSKK). Residues 98–118 (VAFWLLGSSALVLAIVVVGGI) form a helical membrane-spanning segment. Residues 119 to 182 (TRLTESGLSI…NIFFWEWFHR (64 aa)) are Mitochondrial intermembrane-facing. A heme o-binding site is contributed by His181. A helical transmembrane segment spans residues 183-203 (VLGRGIGLTILLPSIYMIVTK). Topologically, residues 204–212 (RASPWLSKR) are mitochondrial matrix. Residues 213–233 (LIGLTGLVGLQGVIGWWMVKS) form a helical membrane-spanning segment. Residues 234–254 (GLSEELFSDGSHPRVSHYRLA) are Mitochondrial intermembrane-facing. The helical transmembrane segment at 255–275 (THLAAAVALYIGLVWTGHGIL) threads the bilayer. His256 is a binding site for heme o. Over 276–311 (QRHAFLKSMKSGSTSQLTSMVSSVQKMKGFRTSVNS) the chain is Mitochondrial matrix. The chain crosses the membrane as a helical span at residues 312-332 (FVGLVLITLLSGAFVAGLDAG). Residues 333–380 (MIYCTFPEMGEGRLAPSKSELFDQRFCRKDDKSDLIWRNMIDNPSLVQ) are Mitochondrial intermembrane-facing. A helical transmembrane segment spans residues 381–401 (LEHRILAITTFVAACGLFIFS). His383 lines the heme b pocket. At 402 to 417 (RAKRNILPKKIKTSIN) the chain is on the mitochondrial matrix side. The helical transmembrane segment at 418-438 (VVTGVVTAQATLGIMTLIYVV) threads the bilayer. A topological domain (mitochondrial intermembrane) is located at residue Pro439. Residues 440–460 (VPLAALHQAGSLVTLTAALSL) traverse the membrane as a helical segment. His446 serves as a coordination point for heme b. Residues 461-616 (AQRLHPEYAL…RNIRLERPKA (156 aa)) are Mitochondrial matrix-facing. The region spanning 502-606 (FRPSFHSEIK…GIRVRIPAQT (105 aa)) is the 2Fe-2S ferredoxin-type domain. Residues 516 to 616 (GTGIKVFFVT…RNIRLERPKA (101 aa)) are mitochondrial ferredoxin yah1-like. The [2Fe-2S] cluster site is built by Cys541, Cys547, Cys550, and Cys587.

In the N-terminal section; belongs to the COX15/CtaA family. Type 2 subfamily. The protein in the C-terminal section; belongs to the adrenodoxin/putidaredoxin family. As to quaternary structure, homodimer. Requires heme b as cofactor. [2Fe-2S] cluster is required as a cofactor. The etp1 preprotein is cleaved into 2 chains after imort into mitochondria. The N-terminal chain containing a heme A synthase cox15-like domain etp1(cd) is a subunit of the membrane-embedded cytochrome c oxidase complex and functions in the respiratory chain. The C-terminal chain containing a ferredoxin yah1-like domain etp1(fd) is released and serves in the matrix as electron transfer protein.

It is found in the mitochondrion inner membrane. It localises to the mitochondrion matrix. The catalysed reaction is Fe(II)-heme o + 2 A + H2O = Fe(II)-heme a + 2 AH2. The protein operates within porphyrin-containing compound metabolism; heme A biosynthesis; heme A from heme O: step 1/1. Catalyzes the second reaction in the biosynthesis of heme A, a prosthetic group of mitochondrial cytochrome c oxidase (CcO). Heme A is synthesized from heme B by two sequential enzymatic reactions catalyzed by heme O synthase (HOS) and heme A synthase (HAS). HAS catalyzes the conversion of heme O to heme A by two successive hydroxylations of the methyl group at C8, in a reaction that involves matrix ferredoxin and ferredoxin reductase. The first hydroxylation forms heme I, the second hydroxylation results in an unstable dihydroxymethyl group, which spontaneously dehydrates, resulting in the formyl group of heme A. In terms of biological role, iron-sulfur protein that transfers electrons in a wide variety of metabolic reactions. Involved in heme A biosynthesis and in iron-sulfur cluster assembly. Transfers electrons from adrenodoxin reductase arh1 to heme A synthase etp1(cd), a heme protein that catalyzes the conversion of heme O to heme A. Required for the de novo synthesis of Fe-S clusters on iron sulfur cluster assembly protein isu1. Interact in its reduced state with isu1 to productively deliver electrons for Fe-S cluster synthesis. Essential for coenzyme Q biosynthesis. May transfer the electrons required for the hydroxylation reaction performed by coq6. In Schizosaccharomyces pombe (strain 972 / ATCC 24843) (Fission yeast), this protein is Heme A synthase-mitochondrial ferredoxin fusion protein.